The following is a 155-amino-acid chain: DNA gyrase inhibitor (155 aa).

This sequence belongs to the DNA gyrase inhibitor family. Interacts with DNA gyrase.

The protein resides in the cytoplasm. Inhibits the supercoiling activity of DNA gyrase. Acts by inhibiting DNA gyrase at an early step, prior to (or at the step of) binding of DNA by the gyrase. It protects cells against toxins that target DNA gyrase, by inhibiting activity of these toxins and reducing the formation of lethal double-strand breaks in the cell. This is DNA gyrase inhibitor from Salmonella typhi.